The primary structure comprises 24 residues: Ascaphin-4 (24 aa).

In terms of tissue distribution, expressed by the skin glands.

It is found in the secreted. Its function is as follows. Antimicrobial peptide that shows higher potency against Gram-negative bacteria than against Gram-positive bacteria. Has a very week hemolytic activity. In Ascaphus truei (Coastal tailed frog), this protein is Ascaphin-4.